Consider the following 159-residue polypeptide: Sec-independent protein translocase protein TatB (159 aa).

Residues 1 to 21 (MIDIGLSKMALIGAVALIVIG) traverse the membrane as a helical segment.

It belongs to the TatB family. As to quaternary structure, the Tat system comprises two distinct complexes: a TatABC complex, containing multiple copies of TatA, TatB and TatC subunits, and a separate TatA complex, containing only TatA subunits. Substrates initially bind to the TatABC complex, which probably triggers association of the separate TatA complex to form the active translocon.

Its subcellular location is the cell inner membrane. Part of the twin-arginine translocation (Tat) system that transports large folded proteins containing a characteristic twin-arginine motif in their signal peptide across membranes. Together with TatC, TatB is part of a receptor directly interacting with Tat signal peptides. TatB may form an oligomeric binding site that transiently accommodates folded Tat precursor proteins before their translocation. The polypeptide is Sec-independent protein translocase protein TatB (Acidovorax sp. (strain JS42)).